The sequence spans 70 residues: DNA gyrase inhibitor YacG (70 aa).

Residues Cys-7, Cys-10, Cys-26, and Cys-30 each contribute to the Zn(2+) site.

This sequence belongs to the DNA gyrase inhibitor YacG family. As to quaternary structure, interacts with GyrB. It depends on Zn(2+) as a cofactor.

Its function is as follows. Inhibits all the catalytic activities of DNA gyrase by preventing its interaction with DNA. Acts by binding directly to the C-terminal domain of GyrB, which probably disrupts DNA binding by the gyrase. The protein is DNA gyrase inhibitor YacG of Shewanella sediminis (strain HAW-EB3).